A 441-amino-acid polypeptide reads, in one-letter code: Glutamate--tRNA ligase 1 (441 aa).

Residues 8–18 (PSPTGHIHVGN) carry the 'HIGH' region motif. The short motif at 239 to 243 (ELSKR) is the 'KMSKS' region element. Position 242 (Lys242) interacts with ATP.

This sequence belongs to the class-I aminoacyl-tRNA synthetase family. Glutamate--tRNA ligase type 1 subfamily. As to quaternary structure, monomer.

The protein localises to the cytoplasm. The enzyme catalyses tRNA(Glu) + L-glutamate + ATP = L-glutamyl-tRNA(Glu) + AMP + diphosphate. Its function is as follows. Catalyzes the attachment of glutamate to tRNA(Glu) in a two-step reaction: glutamate is first activated by ATP to form Glu-AMP and then transferred to the acceptor end of tRNA(Glu). The protein is Glutamate--tRNA ligase 1 of Paracoccus denitrificans (strain Pd 1222).